The sequence spans 260 residues: Snake venom serine protease homolog KN7 (260 aa).

The first 18 residues, 1–18, serve as a signal peptide directing secretion; it reads MVLIRVLANLLILQLSYA. Residues 19–24 constitute a propeptide that is removed on maturation; sequence QKSSEL. One can recognise a Peptidase S1 domain in the interval 25 to 251; it reads IIGGDECNIN…HLDWIKSIIA (227 aa). Disulfide bonds link Cys31–Cys165, Cys52–Cys68, Cys100–Cys258, Cys144–Cys212, Cys176–Cys191, and Cys202–Cys227. N-linked (GlcNAc...) asparagine glycans are attached at residues Asn83, Asn123, and Asn124.

Belongs to the peptidase S1 family. Snake venom subfamily. Expressed by the venom gland.

The protein localises to the secreted. Functionally, snake venom serine protease homolog that may act in the hemostasis system of the prey. The chain is Snake venom serine protease homolog KN7 from Trimeresurus stejnegeri (Chinese green tree viper).